Reading from the N-terminus, the 85-residue chain is Augerpeptide-s6a (85 aa).

The N-terminal stretch at 1–20 is a signal peptide; it reads MTLTMSTVVFFSLILLTLGL. A propeptide spanning residues 21–43 is cleaved from the precursor; that stretch reads QPKDKDEGVMGRSRLGKRGLLMR. Cystine bridges form between cysteine 54–cysteine 65, cysteine 58–cysteine 70, and cysteine 64–cysteine 81.

In terms of tissue distribution, expressed by the venom duct.

It is found in the secreted. The protein is Augerpeptide-s6a of Terebra subulata (Chocolate spotted auger).